Consider the following 183-residue polypeptide: Large ribosomal subunit protein uL10 (183 aa).

This sequence belongs to the universal ribosomal protein uL10 family. In terms of assembly, part of the ribosomal stalk of the 50S ribosomal subunit. The N-terminus interacts with L11 and the large rRNA to form the base of the stalk. The C-terminus forms an elongated spine to which L12 dimers bind in a sequential fashion forming a multimeric L10(L12)X complex.

Forms part of the ribosomal stalk, playing a central role in the interaction of the ribosome with GTP-bound translation factors. In Mesomycoplasma hyopneumoniae (strain 7448) (Mycoplasma hyopneumoniae), this protein is Large ribosomal subunit protein uL10.